We begin with the raw amino-acid sequence, 370 residues long: Putative F-box/kelch-repeat protein At3g46050 (370 aa).

The 47-residue stretch at 15-61 (PTSFSSLPDDIVLNCLARVSRFHYPTLSLVCKGFRSLLDSRELHATR) folds into the F-box domain. Kelch repeat units follow at residues 119–165 (KIYI…VIND) and 167–212 (IYVI…VPGS).

The chain is Putative F-box/kelch-repeat protein At3g46050 from Arabidopsis thaliana (Mouse-ear cress).